Reading from the N-terminus, the 990-residue chain is DNA polymerase (990 aa).

Positions 936–976 are disordered; that stretch reads PSDDAARKRARAGPSALRKQKAASNDEDSSDEDDEDCSQAI. Residues 960-972 are compositionally biased toward acidic residues; that stretch reads NDEDSSDEDDEDC.

It belongs to the DNA polymerase type-B family.

It carries out the reaction DNA(n) + a 2'-deoxyribonucleoside 5'-triphosphate = DNA(n+1) + diphosphate. In terms of biological role, replicates the viral genome, host DNA polymerases cannot substitute for the viral enzyme in this process. The chain is DNA polymerase (POL) from Choristoneura fumiferana (Spruce budworm moth).